Consider the following 327-residue polypeptide: Probable 6-phosphogluconolactonase 3, chloroplastic (327 aa).

Composition is skewed to low complexity over residues 1-29 (MSASAAVSSTCAAASSTTSRRSSSSPASR) and 43-66 (VASRTSPRSPVVPPVYATASPGGA). Positions 1–66 (MSASAAVSST…VYATASPGGA (66 aa)) are disordered. Residues 1-71 (MSASAAVSST…SPGGAGGTTA (71 aa)) constitute a chloroplast transit peptide.

The protein belongs to the glucosamine/galactosamine-6-phosphate isomerase family. 6-phosphogluconolactonase subfamily.

It is found in the plastid. The protein localises to the chloroplast. The enzyme catalyses 6-phospho-D-glucono-1,5-lactone + H2O = 6-phospho-D-gluconate + H(+). The protein operates within carbohydrate degradation; pentose phosphate pathway; D-ribulose 5-phosphate from D-glucose 6-phosphate (oxidative stage): step 2/3. Hydrolysis of 6-phosphogluconolactone to 6-phosphogluconate. The chain is Probable 6-phosphogluconolactonase 3, chloroplastic from Oryza sativa subsp. indica (Rice).